Here is a 106-residue protein sequence, read N- to C-terminus: Protein U4 (106 aa).

Residues 5 to 25 (FFISIILFVVLLNPSLIINMV) traverse the membrane as a helical segment.

It belongs to the nanovirus U4 protein family.

It localises to the membrane. The protein is Protein U4 (DNA-U4) of Cicer arietinum (Chickpea).